The sequence spans 315 residues: 7,8-didemethyl-8-hydroxy-5-deazariboflavin synthase (315 aa).

In terms of domain architecture, Radical SAM core spans 6-237 (ITYSPAFTLV…EDITIQIPAN (232 aa)). Residues Cys20, Cys24, and Cys27 each contribute to the [4Fe-4S] cluster site.

The protein belongs to the radical SAM superfamily. CofG family. In terms of assembly, consists of two subunits, CofG and CofH. [4Fe-4S] cluster is required as a cofactor.

The catalysed reaction is 5-amino-5-(4-hydroxybenzyl)-6-(D-ribitylimino)-5,6-dihydrouracil + S-adenosyl-L-methionine = 7,8-didemethyl-8-hydroxy-5-deazariboflavin + 5'-deoxyadenosine + L-methionine + NH4(+) + H(+). It participates in cofactor biosynthesis; coenzyme F0 biosynthesis. Catalyzes the radical-mediated synthesis of 7,8-didemethyl-8-hydroxy-5-deazariboflavin from 5-amino-5-(4-hydroxybenzyl)-6-(D-ribitylimino)-5,6-dihydrouracil. This Thermosynechococcus vestitus (strain NIES-2133 / IAM M-273 / BP-1) protein is 7,8-didemethyl-8-hydroxy-5-deazariboflavin synthase.